The primary structure comprises 382 residues: Chaperone protein DnaJ (382 aa).

The J domain maps to 4–69 (DYYEVLGVSR…DKRRRYDQFG (66 aa)). A CR-type zinc finger spans residues 138 to 219 (GVEKTIKIKK…CYGEGIKQGE (82 aa)). 8 residues coordinate Zn(2+): cysteine 151, cysteine 154, cysteine 167, cysteine 170, cysteine 193, cysteine 196, cysteine 207, and cysteine 210. CXXCXGXG motif repeat units lie at residues 151 to 158 (CKECNGSG), 167 to 174 (CPTCHGAG), 193 to 200 (CPTCGGEG), and 207 to 214 (CPSCYGEG).

It belongs to the DnaJ family. In terms of assembly, homodimer. Zn(2+) serves as cofactor.

Its subcellular location is the cytoplasm. Its function is as follows. Participates actively in the response to hyperosmotic and heat shock by preventing the aggregation of stress-denatured proteins and by disaggregating proteins, also in an autonomous, DnaK-independent fashion. Unfolded proteins bind initially to DnaJ; upon interaction with the DnaJ-bound protein, DnaK hydrolyzes its bound ATP, resulting in the formation of a stable complex. GrpE releases ADP from DnaK; ATP binding to DnaK triggers the release of the substrate protein, thus completing the reaction cycle. Several rounds of ATP-dependent interactions between DnaJ, DnaK and GrpE are required for fully efficient folding. Also involved, together with DnaK and GrpE, in the DNA replication of plasmids through activation of initiation proteins. The polypeptide is Chaperone protein DnaJ (Chlorobium luteolum (strain DSM 273 / BCRC 81028 / 2530) (Pelodictyon luteolum)).